Reading from the N-terminus, the 269-residue chain is Cytochrome c oxidase subunit 3 (269 aa).

The next 7 helical transmembrane spans lie at 21–41 (PWPMLLSFALLSLTLSLGLTM), 45–65 (IGNMNLVYLALLVVTLTSVFW), 90–110 (GFLLFVLSEVLIFAGLFWAYF), 138–160 (PLLNTIILLSSGATITYSHHALI), 167–187 (ALSGLFITIWLIIIFVTCQYI), 205–225 (FYAGTGLHFLHMVMLAVMLII), and 247–267 (ILYCHVLDIIWLFLYIVFYWW).

Belongs to the cytochrome c oxidase subunit 3 family. Component of the cytochrome c oxidase (complex IV, CIV), a multisubunit enzyme composed of a catalytic core of 3 subunits and several supernumerary subunits. The complex exists as a monomer or a dimer and forms supercomplexes (SCs) in the inner mitochondrial membrane with ubiquinol-cytochrome c oxidoreductase (cytochrome b-c1 complex, complex III, CIII).

It is found in the mitochondrion inner membrane. The catalysed reaction is 4 Fe(II)-[cytochrome c] + O2 + 8 H(+)(in) = 4 Fe(III)-[cytochrome c] + 2 H2O + 4 H(+)(out). Functionally, component of the cytochrome c oxidase, the last enzyme in the mitochondrial electron transport chain which drives oxidative phosphorylation. The respiratory chain contains 3 multisubunit complexes succinate dehydrogenase (complex II, CII), ubiquinol-cytochrome c oxidoreductase (cytochrome b-c1 complex, complex III, CIII) and cytochrome c oxidase (complex IV, CIV), that cooperate to transfer electrons derived from NADH and succinate to molecular oxygen, creating an electrochemical gradient over the inner membrane that drives transmembrane transport and the ATP synthase. Cytochrome c oxidase is the component of the respiratory chain that catalyzes the reduction of oxygen to water. Electrons originating from reduced cytochrome c in the intermembrane space (IMS) are transferred via the dinuclear copper A center (CU(A)) of subunit 2 and heme A of subunit 1 to the active site in subunit 1, a binuclear center (BNC) formed by heme A3 and copper B (CU(B)). The BNC reduces molecular oxygen to 2 water molecules using 4 electrons from cytochrome c in the IMS and 4 protons from the mitochondrial matrix. This chain is Cytochrome c oxidase subunit 3 (COX3), found in Candida glabrata (strain ATCC 2001 / BCRC 20586 / JCM 3761 / NBRC 0622 / NRRL Y-65 / CBS 138) (Yeast).